Consider the following 276-residue polypeptide: uncharacterized protein (276 aa).

Residues P20–S137 enclose the AB hydrolase-1 domain. The disordered stretch occupies residues G57–Y76.

Belongs to the AB hydrolase superfamily.

This is an uncharacterized protein from Staphylococcus aureus (strain MW2).